Here is a 349-residue protein sequence, read N- to C-terminus: Green-sensitive opsin-1 (349 aa).

Residues 1–36 lie on the Extracellular side of the membrane; the sequence is MNGTEGKNFYVPMSNRTGLVRSPFEYPQYYLAEPWQ. N-linked (GlcNAc...) asparagine glycans are attached at residues N2 and N15. A helical transmembrane segment spans residues 37-61; the sequence is FKILALYLFFLMSMGLPINGLTLVV. At 62-73 the chain is on the cytoplasmic side; that stretch reads TAQHKKLRQPLN. Residues 74–99 form a helical membrane-spanning segment; sequence FILVNLAVAGTIMVCFGFTVTFYTAI. Residues 100 to 113 lie on the Extracellular side of the membrane; that stretch reads NGYFVLGPTGCAVE. A disulfide bridge links C110 with C187. The helical transmembrane segment at 114 to 133 threads the bilayer; sequence GFMATLGGEVALWSLVVLAI. The Cytoplasmic segment spans residues 134 to 152; that stretch reads ERYIVVCKPMGSFKFSSSH. A helical transmembrane segment spans residues 153–176; sequence AFAGIAFTWVMALACAAPPLFGWS. At 177–202 the chain is on the extracellular side; that stretch reads RYIPEGMQCSCGPDYYTLNPDYNNES. Residues 203–230 form a helical membrane-spanning segment; sequence YVIYMFVCHFILPVAVIFFTYGRLVCTV. Over 231-252 the chain is Cytoplasmic; it reads KAAAAQQQDSASTQKAEREVTK. A helical transmembrane segment spans residues 253–276; it reads MVILMVFGFLIAWTPYATVAAWIF. Residues 277–284 are Extracellular-facing; sequence FNKGADFS. Residues 285–309 form a helical membrane-spanning segment; sequence AKFMAIPAFFSKSSALYNPVIYVLL. K296 is modified (N6-(retinylidene)lysine). Residues 310-349 lie on the Cytoplasmic side of the membrane; it reads NKQFRNCMLTTIFCGKNPLGDDESSTVSTSKTEVSSVSPA. Residues 329–349 are disordered; the sequence is GDDESSTVSTSKTEVSSVSPA. Residues 334–349 show a composition bias toward low complexity; the sequence is STVSTSKTEVSSVSPA.

This sequence belongs to the G-protein coupled receptor 1 family. Opsin subfamily. Post-translationally, phosphorylated on some or all of the serine and threonine residues present in the C-terminal region. As to expression, the color pigments are found in the cone photoreceptor cells.

The protein resides in the membrane. Functionally, visual pigments are the light-absorbing molecules that mediate vision. They consist of an apoprotein, opsin, covalently linked to cis-retinal. This Carassius auratus (Goldfish) protein is Green-sensitive opsin-1.